Consider the following 152-residue polypeptide: Large ribosomal subunit protein uL15 (152 aa).

The interval 1–57 (MTSTLNTLKSNSGSRKKKLRKGRGIAAGQGASCGFGMRGQKSRSGRPTRPGFEGGQM) is disordered. A compositionally biased stretch (basic residues) spans 14-23 (SRKKKLRKGR). Residues 25 to 37 (IAAGQGASCGFGM) are compositionally biased toward gly residues.

Belongs to the universal ribosomal protein uL15 family. As to quaternary structure, part of the 50S ribosomal subunit.

Its function is as follows. Binds to the 23S rRNA. The protein is Large ribosomal subunit protein uL15 of Prochlorococcus marinus (strain MIT 9312).